A 110-amino-acid chain; its full sequence is UPF0060 membrane protein Mfla_2554 (110 aa).

4 helical membrane-spanning segments follow: residues 7-27 (VALF…PYLW), 33-53 (SPLL…LLTL), 61-81 (VYAA…WVVD), and 83-103 (IIPS…MAII).

Belongs to the UPF0060 family.

It localises to the cell inner membrane. The polypeptide is UPF0060 membrane protein Mfla_2554 (Methylobacillus flagellatus (strain ATCC 51484 / DSM 6875 / VKM B-1610 / KT)).